A 227-amino-acid polypeptide reads, in one-letter code: MPARWGCLFPGKYPCQTGLRHMSDRASVIYILDDDNAVLEALSSLVRSIGLSVECFSSASVFLNDVNRSACGCLILDVRMPEMSGLDVQRQLKELGEQIPIIFISGHGDIPMAVKAIKAGAVDFFTKPFREEELLGAIRAALKLAPQQRSNAPRVSELKENYESLSKREQQVLKFVLRGYLNKQTALELDISEATVKVHRHNIMRKMKVSSIQDLVRVTERLKDSLE.

One can recognise a Response regulatory domain in the interval 28-142 (VIYILDDDNA…ELLGAIRAAL (115 aa)). D77 is modified (4-aspartylphosphate). The 66-residue stretch at 158-223 (LKENYESLSK…DLVRVTERLK (66 aa)) folds into the HTH luxR-type domain. The segment at residues 182-201 (NKQTALELDISEATVKVHRH) is a DNA-binding region (H-T-H motif).

In terms of processing, phosphorylated by TodS.

The protein resides in the cytoplasm. In terms of biological role, member of the two-component regulatory system TodS/TodT involved in the regulation of toluene degradation. Phosphorylated TodT activates transcription of the tod operon (todXFC1C2BADEGIH). Binds specifically to a 6-bp palindromic DNA structure in the tod promoter region. This is Response regulator protein TodT (todT) from Pseudomonas putida (strain ATCC 700007 / DSM 6899 / JCM 31910 / BCRC 17059 / LMG 24140 / F1).